Here is a 222-residue protein sequence, read N- to C-terminus: Hexitol phosphatase B (222 aa).

The active-site Nucleophile is aspartate 13. 2 residues coordinate a divalent metal cation: aspartate 13 and aspartate 15. Residues 13–15 (DMD), 115–116 (SA), and lysine 148 contribute to the substrate site. The active-site Proton donor is the aspartate 15. Position 173 (aspartate 173) interacts with a divalent metal cation.

This sequence belongs to the HAD-like hydrolase superfamily. CbbY/CbbZ/Gph/YieH family. The cofactor is Mg(2+). Requires Mn(2+) as cofactor. Co(2+) is required as a cofactor. Zn(2+) serves as cofactor.

It catalyses the reaction sugar phosphate + H2O = sugar + phosphate.. The enzyme catalyses 2-deoxy-D-glucose 6-phosphate + H2O = 2-deoxy-D-glucose + phosphate. It carries out the reaction D-mannitol 1-phosphate + H2O = D-mannitol + phosphate. The catalysed reaction is D-sorbitol 6-phosphate + H2O = D-sorbitol + phosphate. In terms of biological role, sugar-phosphate phosphohydrolase that catalyzes the dephosphorylation of D-mannitol 1-phosphate and D-sorbitol 6-phosphate. Also catalyzes the dephosphorylation of 2-deoxyglucose 6-phosphate (2dGlu6P); this is a biologically important activity in vivo since it contributes to the elimination of this toxic compound and plays an important role in the resistance of E.coli to 2-deoxyglucose. The sequence is that of Hexitol phosphatase B from Escherichia coli O157:H7.